A 338-amino-acid polypeptide reads, in one-letter code: Ornithine carbamoyltransferase (338 aa).

Serine 2 bears the N-acetylserine mark. Residues 67 to 70, arginine 118, histidine 145, and glutamine 148 contribute to the carbamoyl phosphate site; that span reads STRT. Asparagine 185, aspartate 249, serine 253, and methionine 254 together coordinate L-ornithine. Residue cysteine 289 is the Proton acceptor of the active site. Residues 289 to 290 and arginine 316 contribute to the carbamoyl phosphate site; that span reads CL.

This sequence belongs to the aspartate/ornithine carbamoyltransferase superfamily. OTCase family. In terms of assembly, interacts with CAR1.

The protein localises to the cytoplasm. The enzyme catalyses carbamoyl phosphate + L-ornithine = L-citrulline + phosphate + H(+). It functions in the pathway amino-acid biosynthesis; L-arginine biosynthesis; L-arginine from L-ornithine and carbamoyl phosphate: step 1/3. Forms a stable complex with CAR1 in the presence of ornithine and arginine. In this complex CAR1 retains activity, but ARG3 activity is inhibited. This Saccharomyces cerevisiae (strain ATCC 204508 / S288c) (Baker's yeast) protein is Ornithine carbamoyltransferase (ARG3).